We begin with the raw amino-acid sequence, 279 residues long: Tryptophan 2,3-dioxygenase (279 aa).

Residues 48–52, tyrosine 110, and arginine 114 each bind substrate; that span reads FIIQH. Histidine 237 contacts heme. Threonine 251 contributes to the substrate binding site.

Belongs to the tryptophan 2,3-dioxygenase family. Homotetramer. Heme serves as cofactor.

It carries out the reaction L-tryptophan + O2 = N-formyl-L-kynurenine. It participates in amino-acid degradation; L-tryptophan degradation via kynurenine pathway; L-kynurenine from L-tryptophan: step 1/2. Heme-dependent dioxygenase that catalyzes the oxidative cleavage of the L-tryptophan (L-Trp) pyrrole ring and converts L-tryptophan to N-formyl-L-kynurenine. Catalyzes the oxidative cleavage of the indole moiety. The polypeptide is Tryptophan 2,3-dioxygenase (Bradyrhizobium sp. (strain BTAi1 / ATCC BAA-1182)).